We begin with the raw amino-acid sequence, 40 residues long: Photosystem II reaction center protein J (40 aa).

The chain crosses the membrane as a helical span at residues 8–28 (IPLWLIGTVAGIAVIGLVGVF).

This sequence belongs to the PsbJ family. As to quaternary structure, PSII is composed of 1 copy each of membrane proteins PsbA, PsbB, PsbC, PsbD, PsbE, PsbF, PsbH, PsbI, PsbJ, PsbK, PsbL, PsbM, PsbT, PsbX, PsbY, PsbZ, Psb30/Ycf12, at least 3 peripheral proteins of the oxygen-evolving complex and a large number of cofactors. It forms dimeric complexes.

It is found in the plastid. The protein resides in the chloroplast thylakoid membrane. Its function is as follows. One of the components of the core complex of photosystem II (PSII). PSII is a light-driven water:plastoquinone oxidoreductase that uses light energy to abstract electrons from H(2)O, generating O(2) and a proton gradient subsequently used for ATP formation. It consists of a core antenna complex that captures photons, and an electron transfer chain that converts photonic excitation into a charge separation. The protein is Photosystem II reaction center protein J of Secale cereale (Rye).